Consider the following 194-residue polypeptide: Serine/threonine-protein kinase mos (194 aa).

Residues 47-194 (LCLLNLLGSG…HLDLKPANIF (148 aa)) enclose the Protein kinase domain. Residues 53-61 (LGSGGFGSV) and Lys-74 contribute to the ATP site. Asp-187 serves as the catalytic Proton acceptor.

Belongs to the protein kinase superfamily. Ser/Thr protein kinase family.

It catalyses the reaction L-seryl-[protein] + ATP = O-phospho-L-seryl-[protein] + ADP + H(+). The enzyme catalyses L-threonyl-[protein] + ATP = O-phospho-L-threonyl-[protein] + ADP + H(+). This Dendroaspis angusticeps (Eastern green mamba) protein is Serine/threonine-protein kinase mos (MOS).